A 572-amino-acid polypeptide reads, in one-letter code: Urease subunit alpha (572 aa).

A Urease domain is found at 134–572; that stretch reads AGIDSHIHLI…AAMNQRYFFG (439 aa). The Ni(2+) site is built by histidine 139, histidine 141, and lysine 222. Lysine 222 is subject to N6-carboxylysine. Histidine 224 lines the substrate pocket. Residues histidine 251 and histidine 277 each contribute to the Ni(2+) site. Histidine 325 serves as the catalytic Proton donor. Ni(2+) is bound at residue aspartate 365.

The protein belongs to the metallo-dependent hydrolases superfamily. Urease alpha subunit family. As to quaternary structure, heterotrimer of UreA (gamma), UreB (beta) and UreC (alpha) subunits. Three heterotrimers associate to form the active enzyme. The cofactor is Ni cation. Post-translationally, carboxylation allows a single lysine to coordinate two nickel ions.

The protein resides in the cytoplasm. It carries out the reaction urea + 2 H2O + H(+) = hydrogencarbonate + 2 NH4(+). The protein operates within nitrogen metabolism; urea degradation; CO(2) and NH(3) from urea (urease route): step 1/1. The sequence is that of Urease subunit alpha from Yersinia enterocolitica serotype O:8 / biotype 1B (strain NCTC 13174 / 8081).